Consider the following 515-residue polypeptide: 1-pyrroline-5-carboxylate dehydrogenase (515 aa).

Catalysis depends on residues Glu286 and Cys320.

It belongs to the aldehyde dehydrogenase family. RocA subfamily.

The catalysed reaction is L-glutamate 5-semialdehyde + NAD(+) + H2O = L-glutamate + NADH + 2 H(+). It functions in the pathway amino-acid degradation; L-proline degradation into L-glutamate; L-glutamate from L-proline: step 2/2. This Anoxybacillus flavithermus (strain DSM 21510 / WK1) protein is 1-pyrroline-5-carboxylate dehydrogenase.